A 93-amino-acid chain; its full sequence is MSNVCTIAWIYGRVQGVGFRYTTQHEAQRLGLTGYAKNMDDGSVEVVACGDEAQVEKLIKWLKEGGPRSARVDKILTEPHSPHETLTDFSIRY.

A disulfide bridge connects residues Cys5 and Cys49. An Acylphosphatase-like domain is found at 5 to 93; sequence CTIAWIYGRV…ETLTDFSIRY (89 aa). Active-site residues include Arg20 and Asn38.

Belongs to the acylphosphatase family.

The catalysed reaction is an acyl phosphate + H2O = a carboxylate + phosphate + H(+). This chain is Acylphosphatase, found in Salmonella arizonae (strain ATCC BAA-731 / CDC346-86 / RSK2980).